An 85-amino-acid polypeptide reads, in one-letter code: Probable Thioredoxin (85 aa).

A Glutaredoxin domain is found at 2-85; that stretch reads VVKIEVFTSP…LFEAISDEIE (84 aa). Cysteine 13 and cysteine 16 are oxidised to a cystine.

This sequence belongs to the glutaredoxin family.

It is found in the cytoplasm. Its function is as follows. Does not function as a glutathione-disulfide oxidoreductase in the presence of glutathione and glutathione reductase. May be a component of a ribonucleotide-reducing system distinct from the previously described systems utilizing thioredoxin or glutaredoxin. The protein is Probable Thioredoxin of Methanothermobacter marburgensis (strain ATCC BAA-927 / DSM 2133 / JCM 14651 / NBRC 100331 / OCM 82 / Marburg) (Methanobacterium thermoautotrophicum).